A 729-amino-acid polypeptide reads, in one-letter code: Fatty acid oxidation complex subunit alpha (729 aa).

Positions 1–189 (MLYKGDTLYL…KIGLVDGVVK (189 aa)) are enoyl-CoA hydratase/isomerase. Aspartate 296 lines the substrate pocket. A 3-hydroxyacyl-CoA dehydrogenase region spans residues 311–729 (ETPKQAAVLG…ARPVGDLKTA (419 aa)). NAD(+)-binding positions include methionine 324, aspartate 343, 400–402 (VVE), lysine 407, and serine 429. Histidine 450 acts as the For 3-hydroxyacyl-CoA dehydrogenase activity in catalysis. Asparagine 453 lines the NAD(+) pocket. Substrate is bound by residues asparagine 500 and tyrosine 660. The segment at 708–729 (RHNEPYYPPVEPARPVGDLKTA) is disordered.

In the N-terminal section; belongs to the enoyl-CoA hydratase/isomerase family. It in the C-terminal section; belongs to the 3-hydroxyacyl-CoA dehydrogenase family. In terms of assembly, heterotetramer of two alpha chains (FadB) and two beta chains (FadA).

The enzyme catalyses a (3S)-3-hydroxyacyl-CoA + NAD(+) = a 3-oxoacyl-CoA + NADH + H(+). It carries out the reaction a (3S)-3-hydroxyacyl-CoA = a (2E)-enoyl-CoA + H2O. It catalyses the reaction a 4-saturated-(3S)-3-hydroxyacyl-CoA = a (3E)-enoyl-CoA + H2O. The catalysed reaction is (3S)-3-hydroxybutanoyl-CoA = (3R)-3-hydroxybutanoyl-CoA. The enzyme catalyses a (3Z)-enoyl-CoA = a 4-saturated (2E)-enoyl-CoA. It carries out the reaction a (3E)-enoyl-CoA = a 4-saturated (2E)-enoyl-CoA. The protein operates within lipid metabolism; fatty acid beta-oxidation. Its function is as follows. Involved in the aerobic and anaerobic degradation of long-chain fatty acids via beta-oxidation cycle. Catalyzes the formation of 3-oxoacyl-CoA from enoyl-CoA via L-3-hydroxyacyl-CoA. It can also use D-3-hydroxyacyl-CoA and cis-3-enoyl-CoA as substrate. In Escherichia coli O8 (strain IAI1), this protein is Fatty acid oxidation complex subunit alpha.